Here is a 277-residue protein sequence, read N- to C-terminus: Large ribosomal subunit protein uL2 (277 aa).

2 disordered regions span residues 24–55 and 221–277; these read ITTS…RHHG and RGSV…RKKK.

It belongs to the universal ribosomal protein uL2 family. As to quaternary structure, part of the 50S ribosomal subunit. Forms a bridge to the 30S subunit in the 70S ribosome.

In terms of biological role, one of the primary rRNA binding proteins. Required for association of the 30S and 50S subunits to form the 70S ribosome, for tRNA binding and peptide bond formation. It has been suggested to have peptidyltransferase activity; this is somewhat controversial. Makes several contacts with the 16S rRNA in the 70S ribosome. In Listeria innocua serovar 6a (strain ATCC BAA-680 / CLIP 11262), this protein is Large ribosomal subunit protein uL2.